A 151-amino-acid chain; its full sequence is Small ribosomal subunit protein uS19 (151 aa).

It belongs to the universal ribosomal protein uS19 family.

The polypeptide is Small ribosomal subunit protein uS19 (RPS15) (Picea mariana (Black spruce)).